Reading from the N-terminus, the 226-residue chain is Cytidylate kinase (226 aa).

An ATP-binding site is contributed by 12–20; that stretch reads GPSGAGKGT.

Belongs to the cytidylate kinase family. Type 1 subfamily.

The protein resides in the cytoplasm. It carries out the reaction CMP + ATP = CDP + ADP. The catalysed reaction is dCMP + ATP = dCDP + ADP. The sequence is that of Cytidylate kinase from Vibrio vulnificus (strain CMCP6).